A 368-amino-acid chain; its full sequence is Cytochrome b (368 aa).

The next 4 helical transmembrane spans lie at 32–52 (FGFL…TLAF), 76–98 (WEFR…IHMT), 112–132 (AWMS…LGYV), and 174–194 (FFVL…LHIF). Heme b contacts are provided by His-82 and His-96. Heme b contacts are provided by His-178 and His-192. Residue His-197 participates in a ubiquinone binding. Helical transmembrane passes span 219-239 (MLMT…LQAA), 285-305 (GLLV…IRAL), 323-343 (GWVI…SAIP), and 347-367 (YILY…VLCL).

Belongs to the cytochrome b family. The main subunits of complex b-c1 are: cytochrome b, cytochrome c1 and the Rieske protein. It depends on heme b as a cofactor.

Its subcellular location is the mitochondrion inner membrane. Component of the ubiquinol-cytochrome c reductase complex (complex III or cytochrome b-c1 complex) that is part of the mitochondrial respiratory chain. The b-c1 complex mediates electron transfer from ubiquinol to cytochrome c. Contributes to the generation of a proton gradient across the mitochondrial membrane that is then used for ATP synthesis. This chain is Cytochrome b (MT-CYB), found in Toxoplasma gondii.